Consider the following 369-residue polypeptide: Deoxyhypusine synthase (369 aa).

Residues 105–109 (SNLIS), 131–133 (TAG), Glu137, and Asp238 contribute to the NAD(+) site. 136–137 (EE) lines the spermidine pocket. Asp243 contacts spermidine. Gly283 provides a ligand contact to NAD(+). A spermidine-binding site is contributed by His288. 308–309 (TA) contacts NAD(+). Residues 314–316 (GSD) and 323–329 (EAVSWGK) contribute to the spermidine site. Lys329 serves as the catalytic Nucleophile. 342 to 343 (DA) is an NAD(+) binding site.

Belongs to the deoxyhypusine synthase family. It depends on NAD(+) as a cofactor.

The enzyme catalyses [eIF5A protein]-L-lysine + spermidine = [eIF5A protein]-deoxyhypusine + propane-1,3-diamine. It participates in protein modification; eIF5A hypusination. Catalyzes the NAD-dependent oxidative cleavage of spermidine and the subsequent transfer of the butylamine moiety of spermidine to the epsilon-amino group of a critical lysine residue of the eIF-5A precursor protein to form the intermediate deoxyhypusine residue. This is the first step of the post-translational modification of that lysine into an unusual amino acid residue named hypusine. Hypusination is unique to mature eIF-5A factor and is essential for its function. The protein is Deoxyhypusine synthase (Dhps) of Mus musculus (Mouse).